We begin with the raw amino-acid sequence, 337 residues long: Nucleoid-associated protein PBPRA2585 (337 aa).

It belongs to the YejK family.

It is found in the cytoplasm. The protein localises to the nucleoid. The protein is Nucleoid-associated protein PBPRA2585 of Photobacterium profundum (strain SS9).